Here is a 346-residue protein sequence, read N- to C-terminus: Guanine nucleotide-binding protein subunit beta-2 (346 aa).

7 WD repeats span residues 57–96 (GHINKVNSVHFAGDSRHCVTGSLDGKLIIWDTWTANKVQI), 99–138 (LRSAWVMTVAFSPSGNFVACGGMDNQCTVYDVNNRDASGV), 147–185 (GYEGFLSSCRFLDDGHLITGSGDMKICHWDLEKGVKTMD), 188–227 (GHAGDIAGLSLSPDMKTYITGSVDKTAKLWDVREEGHKQM), 230–269 (GHDMDVSSVCYHPSGFGFASCSEDQTARMYDLRADQQIAQ), 274–313 (QKNTGFTSCALSTSGRYLMCGGIEGNVHSWDTMKQRHTGT), and 316–346 (GHENRITCISLCPNGMCLASTSWDQQVRLWL).

This sequence belongs to the WD repeat G protein beta family. G proteins are composed of 3 units, alpha, beta and gamma. Interacts with Ggamma30A/Guanine nucleotide-binding protein subunit gamma-e. In terms of tissue distribution, expressed exclusively in photoreceptor cells in the compound eye (at protein level).

It localises to the cytoplasm. The protein localises to the cell projection. Its subcellular location is the axon. The protein resides in the rhabdomere. Guanine nucleotide-binding proteins (G proteins) are involved as a modulator or transducer in various transmembrane signaling systems. The beta and gamma chains are required for the GTPase activity, for replacement of GDP by GTP, and for G protein-effector interaction. This is Guanine nucleotide-binding protein subunit beta-2 (Gbeta76C) from Drosophila melanogaster (Fruit fly).